The chain runs to 744 residues: Potassium-transporting ATPase ATP-binding subunit (744 aa).

4 helical membrane passes run 80–100, 108–128, 265–285, and 310–330; these read PVMFVVYIGSILTTLLWVMAL, AGFILAVSVWLWFTVLFANVA, LALTILLVSLTIILLLATVTL, and VLVALLVCLIPTTIGGLLSAI. Aspartate 363 (4-aspartylphosphate intermediate) is an active-site residue. ATP contacts are provided by residues aspartate 400, glutamate 404, 435-442, and lysine 457; that span reads FSAQTRMS. 2 residues coordinate Mg(2+): aspartate 580 and aspartate 584. The next 3 membrane-spanning stretches (helical) occupy residues 650 to 670, 678 to 698, and 724 to 744; these read FAIIPAAFATTYPQLAALNVM, AVMSAVIFNALIIVFLIPLAL, and LLLPFPGIKLIDMFLAAMGWV.

Belongs to the cation transport ATPase (P-type) (TC 3.A.3) family. Type IA subfamily. The system is composed of three essential subunits: KdpA, KdpB and KdpC.

The protein resides in the cell inner membrane. It carries out the reaction K(+)(out) + ATP + H2O = K(+)(in) + ADP + phosphate + H(+). Its function is as follows. Part of the high-affinity ATP-driven potassium transport (or Kdp) system, which catalyzes the hydrolysis of ATP coupled with the electrogenic transport of potassium into the cytoplasm. This subunit is responsible for energy coupling to the transport system and for the release of the potassium ions to the cytoplasm. This Ralstonia nicotianae (strain ATCC BAA-1114 / GMI1000) (Ralstonia solanacearum) protein is Potassium-transporting ATPase ATP-binding subunit.